The chain runs to 160 residues: UPF0225 protein PP_1119 (160 aa).

The protein belongs to the UPF0225 family.

In Pseudomonas putida (strain ATCC 47054 / DSM 6125 / CFBP 8728 / NCIMB 11950 / KT2440), this protein is UPF0225 protein PP_1119.